A 440-amino-acid polypeptide reads, in one-letter code: Damage-control phosphatase ARMT1 (440 aa).

2 residues coordinate Mn(2+): Asp-252 and Asn-253. Substrate is bound at residue 252–253; the sequence is DN. The S-adenosyl-L-methionine site is built by Glu-257 and Asp-290. Asp-290 contacts Mn(2+). Residues 366-370 and Lys-403 contribute to the substrate site; that span reads DLNYR. Positions 400–403 match the Subfamily III RTxK motif motif; that stretch reads RTLK.

It belongs to the damage-control phosphatase family. Sugar phosphate phosphatase III subfamily. Mn(2+) is required as a cofactor. The cofactor is Ni(2+). Automethylated.

It catalyses the reaction beta-D-fructose 1-phosphate + H2O = D-fructose + phosphate. The enzyme catalyses beta-D-fructose 6-phosphate = dihydroxyacetone + D-glyceraldehyde 3-phosphate. It carries out the reaction L-glutamyl-[protein] + S-adenosyl-L-methionine = [protein]-L-glutamate 5-O-methyl ester + S-adenosyl-L-homocysteine. Metal-dependent phosphatase that shows phosphatase activity against several substrates, including fructose-1-phosphate and fructose-6-phosphate. Its preference for fructose-1-phosphate, a strong glycating agent that causes DNA damage rather than a canonical yeast metabolite, suggests a damage-control function in hexose phosphate metabolism. Has also been shown to have O-methyltransferase activity that methylates glutamate residues of target proteins to form gamma-glutamyl methyl ester residues. Possibly methylates PCNA, suggesting it is involved in the DNA damage response. This chain is Damage-control phosphatase ARMT1, found in Xenopus tropicalis (Western clawed frog).